Consider the following 288-residue polypeptide: Hydroxyethylthiazole kinase (288 aa).

Met-55 serves as a coordination point for substrate. Residues Asn-131 and Ser-177 each contribute to the ATP site. Gly-204 contacts substrate.

This sequence belongs to the Thz kinase family. It depends on Mg(2+) as a cofactor.

It carries out the reaction 5-(2-hydroxyethyl)-4-methylthiazole + ATP = 4-methyl-5-(2-phosphooxyethyl)-thiazole + ADP + H(+). It functions in the pathway cofactor biosynthesis; thiamine diphosphate biosynthesis; 4-methyl-5-(2-phosphoethyl)-thiazole from 5-(2-hydroxyethyl)-4-methylthiazole: step 1/1. Functionally, catalyzes the phosphorylation of the hydroxyl group of 4-methyl-5-beta-hydroxyethylthiazole (THZ). The protein is Hydroxyethylthiazole kinase of Haloquadratum walsbyi (strain DSM 16790 / HBSQ001).